The primary structure comprises 199 residues: Nucleoid occlusion factor SlmA (199 aa).

The region spanning 10 to 71 (RNRREEILQA…SLIEFIEDSL (62 aa)) is the HTH tetR-type domain. The H-T-H motif DNA-binding region spans 34-53 (TTAKLAANVGVSEAALYRHF). Residues 120–140 (NRLQGRINQLFERIEVQIRQV) adopt a coiled-coil conformation.

The protein belongs to the nucleoid occlusion factor SlmA family. In terms of assembly, homodimer. Interacts with FtsZ.

Its subcellular location is the cytoplasm. The protein localises to the nucleoid. Its function is as follows. Required for nucleoid occlusion (NO) phenomenon, which prevents Z-ring formation and cell division over the nucleoid. Acts as a DNA-associated cell division inhibitor that binds simultaneously chromosomal DNA and FtsZ, and disrupts the assembly of FtsZ polymers. SlmA-DNA-binding sequences (SBS) are dispersed on non-Ter regions of the chromosome, preventing FtsZ polymerization at these regions. This is Nucleoid occlusion factor SlmA from Photorhabdus laumondii subsp. laumondii (strain DSM 15139 / CIP 105565 / TT01) (Photorhabdus luminescens subsp. laumondii).